The sequence spans 1423 residues: Protein Shroom2 (1423 aa).

Residues 1 to 101 (MRPSTVTSRI…PDHTLPKADA (101 aa)) form a disordered region. The span at 8-27 (SRIWWSESSSSSSHDLSGSW) shows a compositional bias: low complexity. 2 stretches are compositionally biased toward polar residues: residues 28-69 (EHTS…NSSI) and 83-93 (GSFSTCSSTPD). A Phosphoserine modification is found at Ser103. The disordered stretch occupies residues 116-171 (ASRPGSSRQSQSTGDPQGLQDRPSSFLPRVPGNSSKSPRPEDNIEPKIATSGRSNF). Polar residues predominate over residues 119–130 (PGSSRQSQSTGD). Phosphoserine is present on residues Ser185, Ser197, and Ser291. Disordered regions lie at residues 300–357 (SYHG…VNQK), 586–630 (TSFQ…SAPR), 758–855 (EILS…SGGQ), 872–930 (PSSS…KLTD), and 1045–1085 (VETP…KEKT). The region spanning 575–677 (LKEAQTRVLK…SEPEKINEVG (103 aa)) is the ASD1 domain. Over residues 761-771 (SEDRKVEKASE) the composition is skewed to basic and acidic residues. Phosphoserine occurs at positions 806, 830, 831, and 833. Residue Thr834 is modified to Phosphothreonine. Over residues 872 to 885 (PSSSVLSSAQPQDS) the composition is skewed to low complexity. The span at 891–923 (DPTSPQPEAQLSSKCQHLQTSTMETSRSPSPQF) shows a compositional bias: polar residues. A phosphoserine mark is found at Ser918 and Ser920. A compositionally biased stretch (pro residues) spans 1054–1065 (PEPQPPSTPAPP). A phosphoserine mark is found at Ser1072 and Ser1329. In terms of domain architecture, ASD2 spans 1092–1418 (EELAREIVGK…QLKCLFDSLQ (327 aa)).

The protein belongs to the shroom family. Interacts with F-actin.

Its subcellular location is the apical cell membrane. The protein resides in the cell junction. It localises to the tight junction. The protein localises to the cytoplasm. It is found in the cytoskeleton. Functionally, may be involved in endothelial cell morphology changes during cell spreading. In the retinal pigment epithelium, may regulate the biogenesis of melanosomes and promote their association with the apical cell surface by inducing gamma-tubulin redistribution. This is Protein Shroom2 (Shroom2) from Rattus norvegicus (Rat).